Reading from the N-terminus, the 337-residue chain is Ketol-acid reductoisomerase (NADP(+)) (337 aa).

One can recognise a KARI N-terminal Rossmann domain in the interval V3 to T183. NADP(+) is bound by residues Y26–Q29, K49, S52, S54, and D84–Q87. H109 is an active-site residue. Residue G135 participates in NADP(+) binding. One can recognise a KARI C-terminal knotted domain in the interval T184 to V329. Residues D192, E196, E228, and E232 each coordinate Mg(2+). Residue S253 participates in substrate binding.

It belongs to the ketol-acid reductoisomerase family. Mg(2+) serves as cofactor.

The catalysed reaction is (2R)-2,3-dihydroxy-3-methylbutanoate + NADP(+) = (2S)-2-acetolactate + NADPH + H(+). It carries out the reaction (2R,3R)-2,3-dihydroxy-3-methylpentanoate + NADP(+) = (S)-2-ethyl-2-hydroxy-3-oxobutanoate + NADPH + H(+). It functions in the pathway amino-acid biosynthesis; L-isoleucine biosynthesis; L-isoleucine from 2-oxobutanoate: step 2/4. It participates in amino-acid biosynthesis; L-valine biosynthesis; L-valine from pyruvate: step 2/4. Its function is as follows. Involved in the biosynthesis of branched-chain amino acids (BCAA). Catalyzes an alkyl-migration followed by a ketol-acid reduction of (S)-2-acetolactate (S2AL) to yield (R)-2,3-dihydroxy-isovalerate. In the isomerase reaction, S2AL is rearranged via a Mg-dependent methyl migration to produce 3-hydroxy-3-methyl-2-ketobutyrate (HMKB). In the reductase reaction, this 2-ketoacid undergoes a metal-dependent reduction by NADPH to yield (R)-2,3-dihydroxy-isovalerate. This chain is Ketol-acid reductoisomerase (NADP(+)), found in Mycobacterium sp. (strain JLS).